Consider the following 1083-residue polypeptide: Phospholipase D beta 1 (1083 aa).

3 stretches are compositionally biased toward pro residues: residues 26–38 (RPPS…PPPT), 46–66 (YPYP…PPPH), and 132–148 (QYPP…PPPQ). Residues 26-231 (RPPSSEPYPP…PNSSFPSNSH (206 aa)) form a disordered region. 2 stretches are compositionally biased toward polar residues: residues 191-213 (ISTN…SWQS) and 222-231 (PNSSFPSNSH). Residues 252–393 (HSADMQMTLF…YSGAKIEGTY (142 aa)) enclose the C2 domain. Asp-455 contacts Ca(2+). One can recognise a PLD phosphodiesterase 1 domain in the interval 595-630 (TIYTHHQKNVIVDADAGGNRRKIIAFVGGLDLCDGR). Catalysis depends on residues His-600, Lys-602, and Asp-607. His-600 lines the a 1,2-diacyl-sn-glycero-3-phosphate pocket. Ca(2+) is bound by residues His-636 and His-668. A 1,2-diacyl-sn-glycero-3-phosphate contacts are provided by Gln-796 and His-934. The region spanning 929 to 956 (FMVYVHSKGMVVDDEYVVIGSANINQRS) is the PLD phosphodiesterase 2 domain. Residues His-934, Lys-936, and Asp-941 contribute to the active site. Residue Glu-997 coordinates Ca(2+).

Belongs to the phospholipase D family. C2-PLD subfamily. Ca(2+) serves as cofactor. In terms of tissue distribution, expressed in stems, and to a lower amount in leaves, flowers and siliques.

The protein localises to the cytoplasm. Its subcellular location is the membrane. The catalysed reaction is a 1,2-diacyl-sn-glycero-3-phosphocholine + H2O = a 1,2-diacyl-sn-glycero-3-phosphate + choline + H(+). With respect to regulation, inhibited by neomycin. Up-regulated by PIP2 binding. In terms of biological role, hydrolyzes glycerol-phospholipids at the terminal phosphodiesteric bond to generate phosphatidic acids (PA). Plays an important role in various cellular processes, including phytohormone action, vesicular trafficking, secretion, cytoskeletal arrangement, meiosis, tumor promotion, pathogenesis, membrane deterioration and senescence. Involved in regulating stomatal movement and plant-water status. Can use phosphatidylserine (PS) and phosphatidylethanolamine (PE) as substrates only in the presence of PIP2. Can use phosphatidylcholine (PC), phosphatidylglycerol (PG) or N-acylphosphatidylethanolamine (NAPE) as substrates in the presence of PE and PIP2. Modulates defense responses to bacterial and fungal pathogens. In Arabidopsis thaliana (Mouse-ear cress), this protein is Phospholipase D beta 1.